The chain runs to 381 residues: Neuropeptide Y receptor type 2 (381 aa).

Residues 1 to 35 (MGPIGTEADENQTVEEMKVEQYGPQTTPRGELVPD) form a disordered region. Topologically, residues 1-51 (MGPIGTEADENQTVEEMKVEQYGPQTTPRGELVPDPEPELIDSTKLIEVQV) are extracellular. A glycan (N-linked (GlcNAc...) asparagine) is linked at Asn11. The chain crosses the membrane as a helical span at residues 52 to 72 (VLILAYCSIILLGVIGNSLVI). Over 73 to 86 (HVVIKFKSMRTVTN) the chain is Cytoplasmic. Residues 87–107 (FFIANLAVADLVVNTLCLPFT) form a helical membrane-spanning segment. The Extracellular segment spans residues 108-124 (LTYTLMGEWKMGPVLCH). An intrachain disulfide couples Cys123 to Cys203. A helical transmembrane segment spans residues 125–145 (LVPYAQGLAVQVSTITLTVIA). Topologically, residues 146–165 (LDRHRCIVYHLESKISKRIS) are cytoplasmic. Residues 166–186 (FLIIGLAWGISALLASPLAIF) traverse the membrane as a helical segment. Topologically, residues 187 to 216 (REYSLIEIIPDFEIVACTEKWPGEEKSIYG) are extracellular. A helical membrane pass occupies residues 217–237 (TVYSLSSLLILYVLPLGIISF). Residues 238 to 268 (SYTRIWSKLKSHVSPGAANDHYHQRRQKTTK) lie on the Cytoplasmic side of the membrane. The helical transmembrane segment at 269-289 (MLVCVVVVFAVSWLPLHAFQL) threads the bilayer. Residues 290 to 304 (AVDIDSHVLDLKEYK) are Extracellular-facing. A helical membrane pass occupies residues 305–325 (LIFTVFHIIAMCSTFANPLLY). Residues 326 to 381 (GWMNSNYRKAFLSAFRCEQRLDAIHSEVSVTFKAKKNLEVRKNSGPNDSFTEATNV) are Cytoplasmic-facing. A lipid anchor (S-palmitoyl cysteine) is attached at Cys342.

It belongs to the G-protein coupled receptor 1 family.

The protein resides in the cell membrane. In terms of biological role, receptor for neuropeptide Y and peptide YY. The chain is Neuropeptide Y receptor type 2 (NPY2R) from Macaca mulatta (Rhesus macaque).